A 399-amino-acid chain; its full sequence is Phosphoglycerate kinase (399 aa).

Substrate contacts are provided by residues aspartate 22–asparagine 24, arginine 38, histidine 61–arginine 64, arginine 120, and arginine 153. ATP-binding positions include lysine 206, glycine 297, glutamate 328, and glycine 354 to threonine 357.

Belongs to the phosphoglycerate kinase family. In terms of assembly, monomer.

The protein resides in the cytoplasm. It catalyses the reaction (2R)-3-phosphoglycerate + ATP = (2R)-3-phospho-glyceroyl phosphate + ADP. It functions in the pathway carbohydrate degradation; glycolysis; pyruvate from D-glyceraldehyde 3-phosphate: step 2/5. This Campylobacter concisus (strain 13826) protein is Phosphoglycerate kinase.